The sequence spans 284 residues: MASQFMKNLKEEVTCPVCLNLMVKPVSADCGHTFCQGCITLYFESIKCDKKVFICPVCRISYQFSNLRPNRNVANIVERLKMFKPSPEEEQKVFNCARHGKKLQLFCRKDMMAICWLCERSQEHRGHKTALIEEVAQEYKEQLQVVLQRLMADKKKFENWKDDLQKDRTYWENQIQKDVQNVRSEFKRMRDIMDSEEKKELQKLRQEKEDILNNLAESESEHAQQSKLLEDFISDVEHQLQCSDIEILQVRLQDVPGSESQKAWKPLPFLSAAVVFLVMTVSSS.

The RING-type zinc-finger motif lies at 15–59 (CPVCLNLMVKPVSADCGHTFCQGCITLYFESIKCDKKVFICPVCR). The B box-type zinc finger occupies 91–132 (QKVFNCARHGKKLQLFCRKDMMAICWLCERSQEHRGHKTALI). 4 residues coordinate Zn(2+): cysteine 96, histidine 99, cysteine 118, and histidine 124. Residues 130 to 234 (ALIEEVAQEY…QSKLLEDFIS (105 aa)) are a coiled coil.

It belongs to the TRIM/RBCC family. In terms of tissue distribution, expressed in embryonic CNS, liver, kidney, olfactory epithelium.

It is found in the cytoplasm. This Mus musculus (Mouse) protein is Tripartite motif-containing protein 12A (Trim12a).